Consider the following 217-residue polypeptide: Probable GTP-binding protein EngB (217 aa).

Residues Asp-40–Gly-217 enclose the EngB-type G domain. GTP contacts are provided by residues Gly-48–Ser-55, Gly-75–Glu-79, Asp-95–Gly-98, Thr-162–Asp-165, and Thr-196–Ser-198. Ser-55 and Thr-77 together coordinate Mg(2+).

This sequence belongs to the TRAFAC class TrmE-Era-EngA-EngB-Septin-like GTPase superfamily. EngB GTPase family. It depends on Mg(2+) as a cofactor.

Necessary for normal cell division and for the maintenance of normal septation. The chain is Probable GTP-binding protein EngB from Novosphingobium aromaticivorans (strain ATCC 700278 / DSM 12444 / CCUG 56034 / CIP 105152 / NBRC 16084 / F199).